A 415-amino-acid chain; its full sequence is S-inosyl-L-homocysteine hydrolase (415 aa).

Residues Asp-123 and Glu-148 each contribute to the substrate site. 149–151 contributes to the NAD(+) binding site; the sequence is TTT. Substrate contacts are provided by Lys-178 and Asp-182. NAD(+)-binding positions include Asn-183, 212–217, Glu-235, 291–293, and Asn-337; these read GYGWCG and AGH.

Belongs to the adenosylhomocysteinase family. As to quaternary structure, exists both as a homotetramer and a homodimer, in a 4:1 ratio. The cofactor is NAD(+).

It localises to the cytoplasm. The enzyme catalyses S-inosyl-L-homocysteine + H2O = L-homocysteine + inosine. The protein operates within amino-acid biosynthesis; S-adenosyl-L-methionine biosynthesis. Functionally, catalyzes the hydrolysis of S-inosyl-L-homocysteine (SIH) to L-homocysteine (Hcy) and inosine. Likely functions in a S-adenosyl-L-methionine (SAM) recycling pathway from S-adenosyl-L-homocysteine (SAH) produced from SAM-dependent methylation reactions. Can also catalyze the reverse reaction in vitro, i.e. the synthesis of SIH from Hcy and inosine. Is specific for SIH and inosine as it is unable to either hydrolyze SAH or synthesize SAH from adenosine and Hcy. The chain is S-inosyl-L-homocysteine hydrolase from Methanocaldococcus jannaschii (strain ATCC 43067 / DSM 2661 / JAL-1 / JCM 10045 / NBRC 100440) (Methanococcus jannaschii).